The following is a 330-amino-acid chain: Phosphate acyltransferase (330 aa).

Belongs to the PlsX family. Homodimer. Probably interacts with PlsY.

It is found in the cytoplasm. The enzyme catalyses a fatty acyl-[ACP] + phosphate = an acyl phosphate + holo-[ACP]. It participates in lipid metabolism; phospholipid metabolism. Its function is as follows. Catalyzes the reversible formation of acyl-phosphate (acyl-PO(4)) from acyl-[acyl-carrier-protein] (acyl-ACP). This enzyme utilizes acyl-ACP as fatty acyl donor, but not acyl-CoA. This is Phosphate acyltransferase from Streptococcus pneumoniae (strain JJA).